The chain runs to 300 residues: NAD kinase (300 aa).

The Proton acceptor role is filled by D75. NAD(+) is bound by residues D75–G76, N149–D150, R177, D179, T190–S195, A214, and Q248.

This sequence belongs to the NAD kinase family. It depends on a divalent metal cation as a cofactor.

The protein resides in the cytoplasm. It carries out the reaction NAD(+) + ATP = ADP + NADP(+) + H(+). Functionally, involved in the regulation of the intracellular balance of NAD and NADP, and is a key enzyme in the biosynthesis of NADP. Catalyzes specifically the phosphorylation on 2'-hydroxyl of the adenosine moiety of NAD to yield NADP. The polypeptide is NAD kinase (Burkholderia mallei (strain SAVP1)).